A 339-amino-acid polypeptide reads, in one-letter code: Phosphoribosylformylglycinamidine cyclo-ligase (339 aa).

This sequence belongs to the AIR synthase family.

It is found in the cytoplasm. The catalysed reaction is 2-formamido-N(1)-(5-O-phospho-beta-D-ribosyl)acetamidine + ATP = 5-amino-1-(5-phospho-beta-D-ribosyl)imidazole + ADP + phosphate + H(+). It functions in the pathway purine metabolism; IMP biosynthesis via de novo pathway; 5-amino-1-(5-phospho-D-ribosyl)imidazole from N(2)-formyl-N(1)-(5-phospho-D-ribosyl)glycinamide: step 2/2. The chain is Phosphoribosylformylglycinamidine cyclo-ligase from Fusobacterium nucleatum subsp. nucleatum (strain ATCC 25586 / DSM 15643 / BCRC 10681 / CIP 101130 / JCM 8532 / KCTC 2640 / LMG 13131 / VPI 4355).